The chain runs to 138 residues: Phosphoribosyl-AMP cyclohydrolase (138 aa).

Mg(2+) is bound at residue Asp84. Cys85 is a Zn(2+) binding site. Residues Asp86 and Asp88 each coordinate Mg(2+). Positions 102 and 109 each coordinate Zn(2+).

It belongs to the PRA-CH family. As to quaternary structure, homodimer. The cofactor is Mg(2+). Requires Zn(2+) as cofactor.

Its subcellular location is the cytoplasm. It carries out the reaction 1-(5-phospho-beta-D-ribosyl)-5'-AMP + H2O = 1-(5-phospho-beta-D-ribosyl)-5-[(5-phospho-beta-D-ribosylamino)methylideneamino]imidazole-4-carboxamide. It participates in amino-acid biosynthesis; L-histidine biosynthesis; L-histidine from 5-phospho-alpha-D-ribose 1-diphosphate: step 3/9. Catalyzes the hydrolysis of the adenine ring of phosphoribosyl-AMP. The sequence is that of Phosphoribosyl-AMP cyclohydrolase from Burkholderia lata (strain ATCC 17760 / DSM 23089 / LMG 22485 / NCIMB 9086 / R18194 / 383).